The chain runs to 80 residues: 14-3-3-like protein 1 (80 aa).

Belongs to the 14-3-3 family.

This is 14-3-3-like protein 1 from Pseudotsuga menziesii (Douglas-fir).